The following is a 329-amino-acid chain: MSKAPVRVAVTGAAGQIGYSLLFRIASGEMLGKDQPVILQLLDLPQAQKAVKGVMMELEDCAFPLLAGMVATDDPNVAFKDADYCLLVGARPRGPGMERADLLTANGAIFTVQGKAIAENANENVKVLVVGNPCNTNAYIAGAAARKVGRTNPNNYHGMLRLDHNRALSQLAAKTGRPVSSLKKMVVWGNHSPTMYADYRFCTSNGDSVKALVNDHAWNNDVFLPTVGKRGAAIIDARGLSSAASAANAAIDHMHDWALGSDDWVTMGVPSDGSYGIPAGVVFGVPCECKNGDFKIIQGLEIDEYSREKINKTLGELEDERAAVADMLK.

12 to 18 serves as a coordination point for NAD(+); sequence GAAGQIG. Residues arginine 93 and arginine 99 each coordinate substrate. Residues asparagine 106, glutamine 113, and 130–132 contribute to the NAD(+) site; that span reads VGN. Residues asparagine 132 and arginine 166 each coordinate substrate. Histidine 191 (proton acceptor) is an active-site residue.

It belongs to the LDH/MDH superfamily. MDH type 2 family.

The enzyme catalyses (S)-malate + NAD(+) = oxaloacetate + NADH + H(+). In terms of biological role, catalyzes the reversible oxidation of malate to oxaloacetate. The chain is Malate dehydrogenase from Aromatoleum aromaticum (strain DSM 19018 / LMG 30748 / EbN1) (Azoarcus sp. (strain EbN1)).